The following is a 201-amino-acid chain: Small ribosomal subunit protein uS4c (201 aa).

An S4 RNA-binding domain is found at 89 to 152 (MRLDNILFRL…NSRTLVQNLI (64 aa)).

Belongs to the universal ribosomal protein uS4 family. Part of the 30S ribosomal subunit. Contacts protein S5. The interaction surface between S4 and S5 is involved in control of translational fidelity.

Its subcellular location is the plastid. The protein localises to the chloroplast. In terms of biological role, one of the primary rRNA binding proteins, it binds directly to 16S rRNA where it nucleates assembly of the body of the 30S subunit. Its function is as follows. With S5 and S12 plays an important role in translational accuracy. In Crucihimalaya wallichii (Rock-cress), this protein is Small ribosomal subunit protein uS4c (rps4).